The sequence spans 526 residues: DNA polymerase epsilon subunit B (526 aa).

It belongs to the DNA polymerase epsilon subunit B family. In terms of assembly, subunit of the DNA polymerase II. Interacts with POL2A (via C-terminus).

It localises to the nucleus. Functionally, as accessory component of DNA polymerase II participates in chromosomal DNA replication. Required for the timing and determination of cell fate during plant embryogenesis and root pole development, by promoting cell cycle and cell type patterning. Necessary for proper shoot (SAM) and root apical meristem (RAM) functions. Is essential to promote the first divisions of the zygote. The chain is DNA polymerase epsilon subunit B from Arabidopsis thaliana (Mouse-ear cress).